The primary structure comprises 112 residues: MYB-like transcription factor ETC2 (112 aa).

Positions 41–78 constitute a Myb-like domain; that stretch reads TEQEEDLISRMYRLVGNRWDLIAGRVVGRKANEIERYW.

Interacts with GL3. In terms of tissue distribution, expressed in stomatal guard mother cells, young stomata and trichomes of young leaves, and inflorescences.

Its subcellular location is the nucleus. In terms of biological role, MYB-type transcription factor involved in epidermal cell fate specification. Acts as a negative regulator of trichome development, by mediating lateral inhibition. Promotes the formation of hair developing cells in H position in root epidermis, probably by inhibiting non-hair cell formation. In Arabidopsis thaliana (Mouse-ear cress), this protein is MYB-like transcription factor ETC2 (ETC2).